The following is a 527-amino-acid chain: Eukaryotic translation initiation factor 4B1 (527 aa).

Disordered regions lie at residues 1–370 and 453–527; these read MAKP…REVV and FGQR…RQGW. Low complexity-rich tracts occupy residues 35–45 and 74–85; these read AAAGGAASFPS and GAAGAPRRVAPA. 2 stretches are compositionally biased toward basic and acidic residues: residues 102–155 and 181–194; these read PRER…DNWG and RSDD…DKKP. A Nuclear localization signal motif is present at residues 196–203; sequence PSRYPSLG. Positions 203–232 are enriched in gly residues; sequence GTGGGFRESSGGGFRESSGGGFRESSGGGF. Residues 293 to 317 are compositionally biased toward basic and acidic residues; the sequence is KPREEVLAEKGLDWRKMEGEIEKKT. Residues 319-336 show a composition bias toward low complexity; it reads RPTSSHSSRPNSAHSSRP. Composition is skewed to basic and acidic residues over residues 472 to 485 and 496 to 510; these read EEPH…DRPR and PVEE…RERG. Over residues 518 to 527 the composition is skewed to low complexity; it reads SDRSSTRQGW.

The protein belongs to the eIF-4 subunit B family. Homodimer. Nonspherical monomer. mRNA-discriminating component of initiation complexes. Phosphorylated.

The protein resides in the nucleus. Functionally, promotes the eIF4F and eIF4A RNA-dependent ATP-hydrolysis activity with different efficiency depending on mRNAs, thus providing mRNA discrimination during initiation of translation. In Triticum aestivum (Wheat), this protein is Eukaryotic translation initiation factor 4B1.